Reading from the N-terminus, the 283-residue chain is Phosphatidylserine decarboxylase proenzyme (283 aa).

Residues Asp90, His143, and Ser248 each act as charge relay system; for autoendoproteolytic cleavage activity in the active site. The active-site Schiff-base intermediate with substrate; via pyruvic acid; for decarboxylase activity is Ser248. Ser248 bears the Pyruvic acid (Ser); by autocatalysis mark.

Belongs to the phosphatidylserine decarboxylase family. PSD-B subfamily. Prokaryotic type I sub-subfamily. Heterodimer of a large membrane-associated beta subunit and a small pyruvoyl-containing alpha subunit. Pyruvate is required as a cofactor. In terms of processing, is synthesized initially as an inactive proenzyme. Formation of the active enzyme involves a self-maturation process in which the active site pyruvoyl group is generated from an internal serine residue via an autocatalytic post-translational modification. Two non-identical subunits are generated from the proenzyme in this reaction, and the pyruvate is formed at the N-terminus of the alpha chain, which is derived from the carboxyl end of the proenzyme. The autoendoproteolytic cleavage occurs by a canonical serine protease mechanism, in which the side chain hydroxyl group of the serine supplies its oxygen atom to form the C-terminus of the beta chain, while the remainder of the serine residue undergoes an oxidative deamination to produce ammonia and the pyruvoyl prosthetic group on the alpha chain. During this reaction, the Ser that is part of the protease active site of the proenzyme becomes the pyruvoyl prosthetic group, which constitutes an essential element of the active site of the mature decarboxylase.

The protein localises to the cell membrane. It carries out the reaction a 1,2-diacyl-sn-glycero-3-phospho-L-serine + H(+) = a 1,2-diacyl-sn-glycero-3-phosphoethanolamine + CO2. It functions in the pathway phospholipid metabolism; phosphatidylethanolamine biosynthesis; phosphatidylethanolamine from CDP-diacylglycerol: step 2/2. In terms of biological role, catalyzes the formation of phosphatidylethanolamine (PtdEtn) from phosphatidylserine (PtdSer). The sequence is that of Phosphatidylserine decarboxylase proenzyme from Francisella tularensis subsp. novicida (strain U112).